The following is a 483-amino-acid chain: Regulatory protein ViaA (483 aa).

This sequence belongs to the ViaA family. Homodimer. Interacts with RavA.

The protein resides in the cytoplasm. Its function is as follows. Component of the RavA-ViaA chaperone complex, which may act on the membrane to optimize the function of some of the respiratory chains. ViaA stimulates the ATPase activity of RavA. The chain is Regulatory protein ViaA from Salmonella schwarzengrund (strain CVM19633).